Here is a 471-residue protein sequence, read N- to C-terminus: Cleavage and polyadenylation specificity factor subunit 7 (471 aa).

The tract at residues 34-68 is disordered; sequence VLTAASQPSDDRSSSTEPPPPVRQEPAPKPNNKTP. A compositionally biased stretch (pro residues) spans 50 to 62; sequence EPPPPVRQEPAPK. The RRM domain maps to 82–162; the sequence is AAVYVGSFSW…EKVDVRPATR (81 aa). Positions 176–220 are disordered; sequence ECVRVPRGGIPPRAHSRDSSDSADGRATPSENLVPSSARVDKPPS. The span at 190–199 shows a compositional bias: basic and acidic residues; sequence HSRDSSDSAD. T203 is subject to Phosphothreonine. At S205 the chain carries Phosphoserine. A Glycyl lysine isopeptide (Lys-Gly) (interchain with G-Cter in SUMO2) cross-link involves residue K354. The tract at residues 409–471 is disordered; the sequence is SVGASGSSSR…HRDRERDRHH (63 aa). Residues S413 and S423 each carry the phosphoserine modification. The interval 418-469 is arg/Ser-rich domain; the sequence is RKRHRSRERSPSRSRESSRRHRDLLHNEDRHDDYFQERNREHERHRDRERDR. 2 stretches are compositionally biased toward basic and acidic residues: residues 425 to 434 and 441 to 471; these read ERSPSRSRES and LLHN…DRHH.

This sequence belongs to the RRM CPSF6/7 family. In terms of assembly, component of the cleavage factor Im (CFIm) complex which is a heterotetramer composed of two subunits of NUDT21/CPSF5 and two subunits of CPSF6 or CPSF7 or a heterodimer of CPSF6 and CPSF7. The cleavage factor Im (CFIm) complex associates with the CPSF and CSTF complexes to promote the assembly of the core mRNA 3'-processing machinery. Interacts with NUDT21/CPSF5. Interacts (via Arg/Ser-rich domain) with FIP1L1 (preferentially via unphosphorylated form and Arg/Glu/Asp-rich region); this interaction mediates, at least in part, the interaction between the CFIm and CPSF complexes and may be inhibited by CPSF7 hyper-phosphorylation. Phosphorylated. In terms of processing, asymmetrically dimethylated on arginine residues by PRMT1.

The protein resides in the nucleus. It localises to the cytoplasm. Its function is as follows. Component of the cleavage factor Im (CFIm) complex that functions as an activator of the pre-mRNA 3'-end cleavage and polyadenylation processing required for the maturation of pre-mRNA into functional mRNAs. CFIm contributes to the recruitment of multiprotein complexes on specific sequences on the pre-mRNA 3'-end, so called cleavage and polyadenylation signals (pA signals). Most pre-mRNAs contain multiple pA signals, resulting in alternative cleavage and polyadenylation (APA) producing mRNAs with variable 3'-end formation. The CFIm complex acts as a key regulator of cleavage and polyadenylation site choice during APA through its binding to 5'-UGUA-3' elements localized in the 3'-untranslated region (UTR) for a huge number of pre-mRNAs. CPSF7 activates directly the mRNA 3'-processing machinery. Binds to pA signals in RNA substrates. The polypeptide is Cleavage and polyadenylation specificity factor subunit 7 (Mus musculus (Mouse)).